The following is a 421-amino-acid chain: Putative B3 domain-containing protein Os08g0333500 (421 aa).

The segment at residues 1–51 (MTVELEKIAGSFFISKGWKTFVHRTGLLSGQYIRFQVLTPSKINVLLFDKK) is a DNA-binding region (TF-B3). The segment at 92–121 (SHTSNKETSSDSRTESMTDIPSSSDNSGET) is disordered. The segment covering 95 to 107 (SNKETSSDSRTES) has biased composition (basic and acidic residues). Polar residues predominate over residues 108 to 121 (MTDIPSSSDNSGET).

The protein resides in the nucleus. The chain is Putative B3 domain-containing protein Os08g0333500 from Oryza sativa subsp. japonica (Rice).